The sequence spans 396 residues: Argininosuccinate synthase (396 aa).

Ala9 to Ser17 is a binding site for ATP. Tyr85 lines the L-citrulline pocket. Gly115 contacts ATP. The L-aspartate site is built by Thr117, Asn121, and Asp122. An L-citrulline-binding site is contributed by Asn121. 4 residues coordinate L-citrulline: Arg125, Ser173, Glu258, and Tyr270.

Belongs to the argininosuccinate synthase family. Type 1 subfamily. In terms of assembly, homotetramer.

Its subcellular location is the cytoplasm. It carries out the reaction L-citrulline + L-aspartate + ATP = 2-(N(omega)-L-arginino)succinate + AMP + diphosphate + H(+). It functions in the pathway amino-acid biosynthesis; L-arginine biosynthesis; L-arginine from L-ornithine and carbamoyl phosphate: step 2/3. This Streptococcus agalactiae serotype V (strain ATCC BAA-611 / 2603 V/R) protein is Argininosuccinate synthase.